The chain runs to 276 residues: Large ribosomal subunit protein uL2 (276 aa).

The tract at residues 224 to 254 is disordered; that stretch reads VMNPVDHPHGGGEGRTSGGRHPVTPWGVPTK.

Belongs to the universal ribosomal protein uL2 family. Part of the 50S ribosomal subunit. Forms a bridge to the 30S subunit in the 70S ribosome.

In terms of biological role, one of the primary rRNA binding proteins. Required for association of the 30S and 50S subunits to form the 70S ribosome, for tRNA binding and peptide bond formation. It has been suggested to have peptidyltransferase activity; this is somewhat controversial. Makes several contacts with the 16S rRNA in the 70S ribosome. This chain is Large ribosomal subunit protein uL2, found in Gluconobacter oxydans (strain 621H) (Gluconobacter suboxydans).